The primary structure comprises 126 residues: Profilin (126 aa).

It belongs to the profilin family. As to quaternary structure, occurs in many kinds of cells as a complex with monomeric actin in a 1:1 ratio. In terms of tissue distribution, expressed in ovary and head.

Its subcellular location is the cytoplasm. It is found in the cytoskeleton. In terms of biological role, binds to actin and affects the structure of the cytoskeleton. At high concentrations, profilin prevents the polymerization of actin, whereas it enhances it at low concentrations. By binding to PIP2, it may inhibit the formation of IP3 and DG. This profilin is required for intercellular cytoplasm transport during Drosophila oogenesis. Function in neurons is essential for adult survival, and is important for climbing behavior and activity. The protein is Profilin (chic) of Drosophila melanogaster (Fruit fly).